Here is a 550-residue protein sequence, read N- to C-terminus: 2-succinyl-5-enolpyruvyl-6-hydroxy-3-cyclohexene-1-carboxylate synthase (550 aa).

It belongs to the TPP enzyme family. MenD subfamily. As to quaternary structure, homodimer. It depends on Mg(2+) as a cofactor. The cofactor is Mn(2+). Thiamine diphosphate is required as a cofactor.

It carries out the reaction isochorismate + 2-oxoglutarate + H(+) = 5-enolpyruvoyl-6-hydroxy-2-succinyl-cyclohex-3-ene-1-carboxylate + CO2. The protein operates within quinol/quinone metabolism; 1,4-dihydroxy-2-naphthoate biosynthesis; 1,4-dihydroxy-2-naphthoate from chorismate: step 2/7. Its pathway is quinol/quinone metabolism; menaquinone biosynthesis. Functionally, catalyzes the thiamine diphosphate-dependent decarboxylation of 2-oxoglutarate and the subsequent addition of the resulting succinic semialdehyde-thiamine pyrophosphate anion to isochorismate to yield 2-succinyl-5-enolpyruvyl-6-hydroxy-3-cyclohexene-1-carboxylate (SEPHCHC). This Desulfitobacterium hafniense (strain DSM 10664 / DCB-2) protein is 2-succinyl-5-enolpyruvyl-6-hydroxy-3-cyclohexene-1-carboxylate synthase.